We begin with the raw amino-acid sequence, 326 residues long: Fructose operon regulatory protein (326 aa).

An HTH lacI-type domain is found at 1–58 (MTLDEIAKLAGVSKTTASYVINGKAQKYRISEKTQHKVMAVVEQYNFRPDHAASALRA). Positions 3 to 22 (LDEIAKLAGVSKTTASYVIN) form a DNA-binding region, H-T-H motif.

As to quaternary structure, homodimer.

Interaction with F1P may induce a structural change in the DNA spacer region between the -35 and -10 elements, thereby facilitating RNAP binding to the promoter to trigger the transcriptional activation of the fru operon. Interaction with F1P does not release FruR from its binding sequence. Functionally, regulates the expression of the fruBKA (fru) operon, which encodes proteins involved in the import and metabolism of fructose. In the absence of fructose 1-phosphate (F1P), binds to the promoter region of fruB, interferes with the binding of the RNA polymerase (RNAP) to the promoter and represses the expression of the operon. In the presence of F1P, activates the transcription of the fru operon by facilitating the binding of RNAP to the promoter. Essential for the expression of the fru operon and thus for growth on fructose. The sequence is that of Fructose operon regulatory protein from Vibrio cholerae serotype O1 (strain ATCC 39315 / El Tor Inaba N16961).